The following is a 1302-amino-acid chain: Multidrug resistance protein homolog 65 (1302 aa).

Residues 1-23 are disordered; it reads MERDEVSTSSSEGKSQEEAPMAE. Residues 1 to 48 lie on the Cytoplasmic side of the membrane; it reads MERDEVSTSSSEGKSQEEAPMAEGLEPTEPIAFLKLFRFSTYGEIGWL. The ABC transmembrane type-1 1 domain maps to 48–369; the sequence is LFFGFIMCCI…TAPFLESFAT (322 aa). The helical transmembrane segment at 49-69 threads the bilayer; sequence FFGFIMCCIKALTLPAVVIIY. Topologically, residues 70–118 are extracellular; that stretch reads SEFTSMLVDRAMQFGTSSNVHALPLFGGGKTLTNASREENNEALYDDSI. An N-linked (GlcNAc...) asparagine glycan is attached at Asn103. Residues 119-147 form a helical membrane-spanning segment; the sequence is SYGILLTIASVVMFISGIFSVDVFNMVAL. At 148–194 the chain is on the cytoplasmic side; the sequence is RQVTRMRIKLFSSVIRQDIGWHDLASKQNFTQSMVDDVEKIRDGISE. The chain crosses the membrane as a helical span at residues 195-215; it reads KVGHFVYLVVGFIITVAISFS. Over 216–223 the chain is Extracellular; it reads YGWKLTLA. The chain crosses the membrane as a helical span at residues 224 to 242; sequence VSSYIPLVILLNYYVAKFQ. At 243 to 302 the chain is on the cytoplasmic side; the sequence is GKLTAREQESYAGAGNLAEEILSSIRTVVSFGGEKSEVQRYENFLVPARKASQWKGAFSG. A helical membrane pass occupies residues 303 to 323; sequence LSDAVLKSMLYLSCAGAFWYG. The Extracellular segment spans residues 324–341; sequence VNLIIDDRNVENKEYTPA. A helical membrane pass occupies residues 342–362; the sequence is ILMIAFFGIIVGADNIARTAP. The Cytoplasmic segment spans residues 363–731; it reads FLESFATARG…LQLAKQEWCY (369 aa). The 237-residue stretch at 405-641 folds into the ABC transporter 1 domain; sequence VEFQDVFFRY…EGAYYNMVRA (237 aa). Residue 440–447 participates in ATP binding; that stretch reads GSSGCGKS. A helical membrane pass occupies residues 732-753; the sequence is LILGTISAVAVGFLYPAFAVIF. Residues 732–1020 form the ABC transmembrane type-1 2 domain; it reads LILGTISAVA…SLAFTPAFSA (289 aa). Residues 754 to 776 are Extracellular-facing; that stretch reads GEFYAALAEKDPEDALRRTAVLS. A helical membrane pass occupies residues 777–798; sequence WACLGLAFLTGLVCFLQTYLFN. The Cytoplasmic segment spans residues 799 to 852; that stretch reads YAGIWLTTRMRAMTFNAMVNQEVGWFDDENNSVGALSARLSGEAVDIQGAIGYP. Residues 853–873 traverse the membrane as a helical segment; sequence LSGMIQALSNFISSVSVAMYY. Residue Asn874 is a topological domain, extracellular. A helical transmembrane segment spans residues 875–894; the sequence is WKLALLCLANCPIIVGSVIL. The Cytoplasmic segment spans residues 895 to 956; the sequence is EAKMMSNAVV…VEVLIRQKLR (62 aa). Residues 957 to 977 form a helical membrane-spanning segment; sequence WRGVLNSTMQASAFFAYAVAL. Residues 978 to 993 are Extracellular-facing; that stretch reads CYGGVLVSEGQLPFQD. The helical transmembrane segment at 994 to 1014 threads the bilayer; sequence IIKVSETLLYGSMMLAQSLAF. Over 1015–1302 the chain is Cytoplasmic; sequence TPAFSAALIA…AKLHKTQKDH (288 aa). Residues 1059–1298 enclose the ABC transporter 2 domain; sequence VRYRGIQFRY…GGIYAKLHKT (240 aa). 1094–1101 contacts ATP; the sequence is GHSGCGKS.

The protein belongs to the ABC transporter superfamily. ABCB family. Multidrug resistance exporter (TC 3.A.1.201) subfamily.

Its subcellular location is the membrane. The catalysed reaction is ATP + H2O + xenobioticSide 1 = ADP + phosphate + xenobioticSide 2.. This chain is Multidrug resistance protein homolog 65 (Mdr65), found in Drosophila melanogaster (Fruit fly).